A 158-amino-acid chain; its full sequence is MALRAPWIALCCVLAVLFVVPAATRDEERQKRGVDFGLQRGFSGSELAKLKLALARAQDPHGPGRKRRDAYEMERQKRGVDFGLQRGFSGSELAKLKLALARAQDPHGPGRKRRDAYEMERQKRGVDFGLQRGFSGSELAKLKLALARAQDPHGPGRK.

An N-terminal signal peptide occupies residues 1 to 24; sequence MALRAPWIALCCVLAVLFVVPAAT. The propeptide occupies 25 to 32; the sequence is RDEERQKR. 2 tandem repeats follow at residues 33–78 and 79–124. A 3 X 46 AA tandem repeats region spans residues 33-158; it reads GVDFGLQRGF…AQDPHGPGRK (126 aa). The residue at position 63 (P63) is a Proline amide. A propeptide spanning residues 64 to 78 is cleaved from the precursor; that stretch reads GRKRRDAYEMERQKR. The tract at residues 101 to 120 is disordered; sequence ARAQDPHGPGRKRRDAYEME. Position 109 is a proline amide (P109). Residues 110 to 124 constitute a propeptide that is removed on maturation; it reads GRKRRDAYEMERQKR. The stretch at 125-158 is one 3; half-length repeat; the sequence is GVDFGLQRGFSGSELAKLKLALARAQDPHGPGRK. Residue P155 is modified to Proline amide.

It belongs to the diuretic hormone class 2 family. Expressed by the venom secretory cell of the spine. The spine is a cuticular structure containing a single large nucleated venom-secreting cell at its base. It is an independent unit capable of producing, storing and injecting venom. On the back of D.vulnerans caterpillars, spines are grouped together by 50 to 100 to form scoli, of which there are eight in D.vulnerans.

It localises to the secreted. Functionally, probable toxin. Does not show insecticidal, antimicrobial and antiparasitic activities. Does not induce increase in intracellular calcium in mouse DRG neurons, suggesting that it does not induce pain. This is U-limacoditoxin(8)-Dv66 from Doratifera vulnerans (Mottled cup moth).